The sequence spans 361 residues: Inner kinetochore subunit CNN1 (361 aa).

Residues 1-22 are disordered; sequence MSTPRKAAGNNENTEVSEIRTP. Ser2 carries the post-translational modification Phosphoserine; by CDK1. A Phosphothreonine; by CDK1 and MPS1 modification is found at Thr14. A Phosphoserine; by CDK1 and MPS1 modification is found at Ser17. Phosphothreonine; by CDK1 is present on residues Thr21 and Thr42. Ser50 bears the Phosphoserine; by CDK1 and MPS1 mark. Residue Ser52 is modified to Phosphoserine; by CDK1. Thr53 carries the phosphothreonine; by MPS1 modification. Ser55 carries the post-translational modification Phosphoserine; by CDK1. The interval 60 to 84 is interacts with the NDC80 complex subunits SPC24 and SPC25 and with the KNL1 complex; that stretch reads NKDPNEVRSFLQDLSQVLARKSQGN. Residue Ser74 is modified to Phosphoserine; by CDK1 and MPS1. Phosphothreonine; by MPS1 is present on residues Thr86 and Thr88. Thr91 is modified (phosphothreonine; by CDK1 and MPS1). The disordered stretch occupies residues 103–132; that stretch reads EESQPEENELLRSRSEKLTDNNIGNETQPD. Positions 111–121 are enriched in basic and acidic residues; the sequence is ELLRSRSEKLT. At Ser115 the chain carries Phosphoserine; by CDK1. The segment covering 122 to 132 has biased composition (polar residues); it reads DNNIGNETQPD. Phosphothreonine; by CDK1 and MPS1 is present on Thr129. Thr134 carries the post-translational modification Phosphothreonine; by MPS1. Residue Ser135 is modified to Phosphoserine; by MPS1. Thr139 bears the Phosphothreonine; by CDK1 and MPS1 mark. Ser153 carries the post-translational modification Phosphoserine; by MPS1. Phosphothreonine; by MPS1 is present on Thr174. Ser177 carries the post-translational modification Phosphoserine; by CDK1. Thr191 is subject to Phosphothreonine; by CDK1. Residue Ser192 is modified to Phosphoserine; by CDK1. The interval 193–255 is disordered; sequence PSIGMDQVDE…SDENLDDIGN (63 aa). Acidic residues predominate over residues 219 to 254; the sequence is PLSEDLPSDDKEETEEAENEDYSFENTSDENLDDIG. Ser268 is modified (phosphoserine; by CDK1). At Ser269 the chain carries Phosphoserine; by MPS1 and IPL1.

The protein belongs to the CENP-T/CNN1 family. In terms of assembly, component of the inner kinetochore constitutive centromere-associated network (CCAN) (also known as central kinetochore CTF19 complex in yeast), which is composed of at least AME1, CHL4, CNN1, CTF3, CTF19, IML3, MCM16, MCM21, MCM22, MHF1, MHF2, MIF2, NKP1, NKP2, OKP1 and WIP1. Interacts (via N-terminus) with the outer kinetochore NDC80 complex subunits SPC24 (via C-terminus) and SPC25 (via C-terminus); the interaction is direct and contributes to the correct spatiotemporal organization of the KMN network. Interacts with outer kinetochore MIS12 complex subunit NNF1. Interacts (via N-terminus) with the KNL1 complex. Post-translationally, phosphorylation of the C-terminus by MPS1 kinase regulates interaction with the outer kinetochore Ndc80 complex. Phosphorylation levels rise from S-phase and through metaphase, the protein is thendephosphorylated in anaphase.

Its subcellular location is the nucleus. The protein resides in the chromosome. The protein localises to the centromere. It localises to the kinetochore. In terms of biological role, component of the kinetochore, a multiprotein complex that assembles on centromeric DNA and attaches chromosomes to spindle microtubules, mediating chromosome segregation and sister chromatid segregation during meiosis and mitosis. Component of the inner kinetochore constitutive centromere-associated network (CCAN), which serves as a structural platform for outer kinetochore assembly. Modulates outer kinetochore KMN network activity by regulating interactions within the network. The sequence is that of Inner kinetochore subunit CNN1 (CNN1) from Saccharomyces cerevisiae (strain ATCC 204508 / S288c) (Baker's yeast).